A 505-amino-acid chain; its full sequence is Facilitated trehalose transporter Tret1 (505 aa).

The Cytoplasmic portion of the chain corresponds to 1-46; sequence MEMEIKDENLRNSVPFVRQLSTDSVKTKTEYDNEDGTPYKSTTQKL. The chain crosses the membrane as a helical span at residues 47-67; sequence FLWTQLLAAFAVSVGSMNVGF. Residues 68-91 lie on the Extracellular side of the membrane; the sequence is SSGYTSPAVLTMNITLDITKEEIT. N-linked (GlcNAc...) asparagine glycosylation occurs at asparagine 80. The chain crosses the membrane as a helical span at residues 92–112; the sequence is WVGGLMPLAALVGGIVGGPLI. Topologically, residues 113–124 are cytoplasmic; the sequence is EYLGRKKTIMGT. Residues 125–145 traverse the membrane as a helical segment; sequence AVPFTIGWMLIANAINVVMVF. The Extracellular segment spans residues 146-149; that stretch reads AGRV. A helical membrane pass occupies residues 150–170; that stretch reads ICGVCVGIVSLAFPVYIGETI. The Cytoplasmic segment spans residues 171 to 175; sequence QPEVR. The helical transmembrane segment at 176-196 threads the bilayer; sequence GALGLLPTAFGNTGILLAFLV. Residues 197–201 are Extracellular-facing; that stretch reads GSYLD. A helical transmembrane segment spans residues 202–222; that stretch reads WSNLAFFGAAIPVPFFLLMIL. Topologically, residues 223-286 are cytoplasmic; it reads TPETPRWYVS…QLFSKRYLPA (64 aa). A helical membrane pass occupies residues 287–307; it reads VMISLGLMLFQQLTGINAVIF. Residues 308–323 lie on the Extracellular side of the membrane; that stretch reads YAASIFQMSGSSVDEN. The chain crosses the membrane as a helical span at residues 324-344; that stretch reads LASIIIGVVNFISTFIATMLI. Over 345–350 the chain is Cytoplasmic; sequence DRLGRK. A helical transmembrane segment spans residues 351-371; it reads VLLYISSVAMITTLLALGAYF. Topologically, residues 372–390 are extracellular; sequence YLKQNHIDVTAYGWLPLAC. A helical membrane pass occupies residues 391-411; that stretch reads LVIYVLGFSIGFGPIPWLMLG. Residues 412 to 419 are Cytoplasmic-facing; it reads EILPSKIR. The chain crosses the membrane as a helical span at residues 420–437; the sequence is GTAASLATGFNWTCTFIV. Over 438–451 the chain is Extracellular; that stretch reads TKTFQNIIDAIYMH. A helical transmembrane segment spans residues 452 to 472; that stretch reads GTLWLFAVICIGGLLFVIFFV. Residues 473 to 505 lie on the Cytoplasmic side of the membrane; sequence PETKGKSLEEIEMKLTSGSRRVRNISKQPENIC.

It belongs to the major facilitator superfamily. Sugar transporter (TC 2.A.1.1) family. Trehalose transporter subfamily. Expressed in many larval tissues at a low level, moderate levels of expression are seen in testis and head and highest expression in muscle.

It is found in the cell membrane. In terms of biological role, high-capacity facilitative transporter for trehalose. Does not transport maltose, sucrose or lactose. Mediates the bidirectional transfer of trehalose. Responsible for the transport of trehalose synthesized in the fat body and the incorporation of trehalose into other tissues that require a carbon source, thereby regulating trehalose levels in the hemolymph. This Bombyx mori (Silk moth) protein is Facilitated trehalose transporter Tret1.